Here is a 376-residue protein sequence, read N- to C-terminus: Protein-tyrosine sulfotransferase 2 (376 aa).

Residues 1–8 (MRLSVRKV) are Cytoplasmic-facing. A helical; Signal-anchor for type II membrane protein transmembrane segment spans residues 9-25 (LLAAGCALALVLAVQLG). Residues 26–376 (QQVLECRAVL…NSTSPHLGSS (351 aa)) lie on the Lumenal side of the membrane. 77–81 (RSGTT) lines the 3'-phosphoadenylyl sulfate pocket. Residues C95 and C155 are joined by a disulfide bond. E98 serves as the catalytic Proton donor/acceptor. The interval 100–104 (RIIPR) is interaction with peptide substrate. Residues R182, S190, and R194 each coordinate 3'-phosphoadenylyl sulfate. Cysteines 224 and 232 form a disulfide. Residues Y237, 284-293 (STDQVIKPVN), and K299 contribute to the 3'-phosphoadenylyl sulfate site. Residues N342 and N367 are each glycosylated (N-linked (GlcNAc...) asparagine).

This sequence belongs to the protein sulfotransferase family. Homodimer. Can also form heterodimers with TPST1. Post-translationally, N-glycosylated. As to expression, widely expressed.

Its subcellular location is the golgi apparatus membrane. The enzyme catalyses L-tyrosyl-[protein] + 3'-phosphoadenylyl sulfate = O-sulfo-L-tyrosine-[protein] + adenosine 3',5'-bisphosphate + H(+). Its function is as follows. Catalyzes the O-sulfation of tyrosine residues within acidic motifs of polypeptides, using 3'-phosphoadenylyl sulfate (PAPS) as cosubstrate. This Mus musculus (Mouse) protein is Protein-tyrosine sulfotransferase 2 (Tpst2).